Reading from the N-terminus, the 131-residue chain is Fluoride-specific ion channel FluC 2 (131 aa).

4 consecutive transmembrane segments (helical) span residues 5–25 (SAVF…NLWI), 35–55 (WLEN…FMIG), 59–79 (PLLS…MSTF), and 95–115 (LLYV…GVFV). Positions 71 and 74 each coordinate Na(+).

The protein belongs to the fluoride channel Fluc/FEX (TC 1.A.43) family.

The protein localises to the cell membrane. It catalyses the reaction fluoride(in) = fluoride(out). With respect to regulation, na(+) is not transported, but it plays an essential structural role and its presence is essential for fluoride channel function. Fluoride-specific ion channel. Important for reducing fluoride concentration in the cell, thus reducing its toxicity. This Bacillus subtilis (strain 168) protein is Fluoride-specific ion channel FluC 2.